Here is a 300-residue protein sequence, read N- to C-terminus: Bifunctional protein FolD 1 (300 aa).

NADP(+) contacts are provided by residues 166–168 (GRS), Ser-191, and Ile-232.

Belongs to the tetrahydrofolate dehydrogenase/cyclohydrolase family. In terms of assembly, homodimer.

The catalysed reaction is (6R)-5,10-methylene-5,6,7,8-tetrahydrofolate + NADP(+) = (6R)-5,10-methenyltetrahydrofolate + NADPH. The enzyme catalyses (6R)-5,10-methenyltetrahydrofolate + H2O = (6R)-10-formyltetrahydrofolate + H(+). Its pathway is one-carbon metabolism; tetrahydrofolate interconversion. Functionally, catalyzes the oxidation of 5,10-methylenetetrahydrofolate to 5,10-methenyltetrahydrofolate and then the hydrolysis of 5,10-methenyltetrahydrofolate to 10-formyltetrahydrofolate. The protein is Bifunctional protein FolD 1 of Roseobacter denitrificans (strain ATCC 33942 / OCh 114) (Erythrobacter sp. (strain OCh 114)).